Consider the following 469-residue polypeptide: Chromosomal replication initiator protein DnaA (469 aa).

Residues 1–71 (MKEFWQTCVS…EALAAEWYQR (71 aa)) form a domain I, interacts with DnaA modulators region. The domain II stretch occupies residues 71–131 (RPVQVTFELP…DAANIVYERS (61 aa)). The segment at 132 to 348 (RLNTDLTFEN…GALRKVLAYA (217 aa)) is domain III, AAA+ region. Residues glycine 176, glycine 178, lysine 179, and threonine 180 each contribute to the ATP site. Residues 349-469 (RFHGRDVLTV…LHVLEQTLKG (121 aa)) form a domain IV, binds dsDNA region.

It belongs to the DnaA family. In terms of assembly, oligomerizes as a right-handed, spiral filament on DNA at oriC.

It localises to the cytoplasm. Its function is as follows. Plays an essential role in the initiation and regulation of chromosomal replication. ATP-DnaA binds to the origin of replication (oriC) to initiate formation of the DNA replication initiation complex once per cell cycle. Binds the DnaA box (a 9 base pair repeat at the origin) and separates the double-stranded (ds)DNA. Forms a right-handed helical filament on oriC DNA; dsDNA binds to the exterior of the filament while single-stranded (ss)DNA is stabiized in the filament's interior. The ATP-DnaA-oriC complex binds and stabilizes one strand of the AT-rich DNA unwinding element (DUE), permitting loading of DNA polymerase. After initiation quickly degrades to an ADP-DnaA complex that is not apt for DNA replication. Binds acidic phospholipids. In Bordetella parapertussis (strain 12822 / ATCC BAA-587 / NCTC 13253), this protein is Chromosomal replication initiator protein DnaA.